We begin with the raw amino-acid sequence, 749 residues long: 5-methyltetrahydropteroyltriglutamate--homocysteine methyltransferase (749 aa).

5-methyltetrahydropteroyltri-L-glutamate contacts are provided by residues 15-18 (RELK) and Lys114. Residues 425–427 (IGS) and Glu478 contribute to the L-homocysteine site. L-methionine is bound by residues 425–427 (IGS) and Glu478. 5-methyltetrahydropteroyltri-L-glutamate is bound at residue Trp555. L-homocysteine is bound at residue Asp593. An L-methionine-binding site is contributed by Asp593. Residue Glu599 participates in 5-methyltetrahydropteroyltri-L-glutamate binding. Zn(2+)-binding residues include His636, Cys638, and Glu660. The active-site Proton donor is the His689. Zn(2+) is bound at residue Cys721.

The protein belongs to the vitamin-B12 independent methionine synthase family. Zn(2+) is required as a cofactor.

The catalysed reaction is 5-methyltetrahydropteroyltri-L-glutamate + L-homocysteine = tetrahydropteroyltri-L-glutamate + L-methionine. It participates in amino-acid biosynthesis; L-methionine biosynthesis via de novo pathway; L-methionine from L-homocysteine (MetE route): step 1/1. Its function is as follows. Catalyzes the transfer of a methyl group from 5-methyltetrahydrofolate to homocysteine resulting in methionine formation. The polypeptide is 5-methyltetrahydropteroyltriglutamate--homocysteine methyltransferase (Streptococcus pneumoniae serotype 19F (strain G54)).